The following is a 739-amino-acid chain: TonB-dependent heme receptor A (739 aa).

The signal sequence occupies residues 1 to 22 (MKMKKQCATLTFFIGLHGYTIA). Residues 38–150 (GHHERQPDRS…FAGTIKLETK (113 aa)) form the TBDR plug domain. Residues 161–739 (LLGGLLKYGY…NIKLSISKQF (579 aa)) form the TBDR beta-barrel domain.

Belongs to the TonB-dependent receptor family.

Its subcellular location is the cell outer membrane. Its function is as follows. Heme receptor. This is TonB-dependent heme receptor A (tdhA) from Haemophilus ducreyi (strain 35000HP / ATCC 700724).